The sequence spans 216 residues: A-type ATP synthase subunit D (216 aa).

It belongs to the V-ATPase D subunit family. Has multiple subunits with at least A(3), B(3), C, D, E, F, H, I and proteolipid K(x). Post-translationally, the N-terminus is blocked.

Its subcellular location is the cell membrane. In terms of biological role, component of the A-type ATP synthase that produces ATP from ADP in the presence of a proton gradient across the membrane. The polypeptide is A-type ATP synthase subunit D (Sulfurisphaera tokodaii (strain DSM 16993 / JCM 10545 / NBRC 100140 / 7) (Sulfolobus tokodaii)).